A 741-amino-acid chain; its full sequence is DNA ligase (741 aa).

Residues 78–82 (DADYD), 127–128 (SL), and E161 each bind NAD(+). K163 functions as the N6-AMP-lysine intermediate in the catalytic mechanism. R184, E219, K335, and K359 together coordinate NAD(+). Residues C464, C467, C482, and C488 each contribute to the Zn(2+) site. The BRCT domain occupies 662-741 (VGDSPVAGKT…DAWRVLAGLA (80 aa)).

It belongs to the NAD-dependent DNA ligase family. LigA subfamily. The cofactor is Mg(2+). Mn(2+) is required as a cofactor.

It carries out the reaction NAD(+) + (deoxyribonucleotide)n-3'-hydroxyl + 5'-phospho-(deoxyribonucleotide)m = (deoxyribonucleotide)n+m + AMP + beta-nicotinamide D-nucleotide.. Functionally, DNA ligase that catalyzes the formation of phosphodiester linkages between 5'-phosphoryl and 3'-hydroxyl groups in double-stranded DNA using NAD as a coenzyme and as the energy source for the reaction. It is essential for DNA replication and repair of damaged DNA. This Dinoroseobacter shibae (strain DSM 16493 / NCIMB 14021 / DFL 12) protein is DNA ligase.